Here is a 953-residue protein sequence, read N- to C-terminus: Coiled-coil domain-containing protein 14 (953 aa).

The segment covering 1-21 (MKRGIRRDPFRKRKLGGRAKK) has biased composition (basic residues). 2 disordered regions span residues 1–22 (MKRGIRRDPFRKRKLGGRAKKV) and 52–72 (SGARPGQVLSSGRHTGPAKLT). Ser-124 is subject to Phosphoserine. 2 disordered regions span residues 126 to 189 (SETA…TSDL) and 268 to 287 (PPCPPKVHSEVQTDGNSQFA). Residues 145 to 154 (YGSKKKRHEK) are compositionally biased toward basic residues. Residues 169–187 (DNKKQIPNEASARSERDTS) show a composition bias toward basic and acidic residues. Polar residues predominate over residues 277–287 (EVQTDGNSQFA). Coiled-coil stretches lie at residues 383–413 (LATNEEKCAREQIREATSERKDLNIHVRDTK) and 483–618 (AMQP…AEKE). 3 positions are modified to phosphoserine: Ser-670, Ser-754, and Ser-798.

Interacts with CEP63.

It localises to the cytoplasm. Its subcellular location is the cytoskeleton. It is found in the microtubule organizing center. The protein localises to the centrosome. The protein resides in the centriolar satellite. Negatively regulates centriole duplication. Negatively regulates CEP63 and CDK2 centrosomal localization. This chain is Coiled-coil domain-containing protein 14 (CCDC14), found in Homo sapiens (Human).